A 137-amino-acid polypeptide reads, in one-letter code: Small ribosomal subunit protein uS12 (137 aa).

Disordered regions lie at residues 1–21 (MPTI…KSDS) and 34–57 (VHTK…TPKK). Asp102 is modified (3-methylthioaspartic acid).

This sequence belongs to the universal ribosomal protein uS12 family. Part of the 30S ribosomal subunit. Contacts proteins S8 and S17. May interact with IF1 in the 30S initiation complex.

With S4 and S5 plays an important role in translational accuracy. In terms of biological role, interacts with and stabilizes bases of the 16S rRNA that are involved in tRNA selection in the A site and with the mRNA backbone. Located at the interface of the 30S and 50S subunits, it traverses the body of the 30S subunit contacting proteins on the other side and probably holding the rRNA structure together. The combined cluster of proteins S8, S12 and S17 appears to hold together the shoulder and platform of the 30S subunit. The sequence is that of Small ribosomal subunit protein uS12 from Streptococcus uberis (strain ATCC BAA-854 / 0140J).